Here is a 72-residue protein sequence, read N- to C-terminus: UPF0270 protein KPK_0377 (72 aa).

Belongs to the UPF0270 family.

This is UPF0270 protein KPK_0377 from Klebsiella pneumoniae (strain 342).